The chain runs to 446 residues: Chromosomal replication initiator protein DnaA (446 aa).

The segment at 1 to 73 is domain I, interacts with DnaA modulators; that stretch reads MAAQLNELWQ…INSMKIITTK (73 aa). The tract at residues 73 to 107 is domain II; that stretch reads KKYDIAFLISSEEALETDEDQETDTNNVNTDTSSS. Positions 108-324 are domain III, AAA+ region; sequence MLNPKYKFDS…GALIRIVAFS (217 aa). The ATP site is built by G152, G154, K155, and T156. The tract at residues 325 to 446 is domain IV, binds dsDNA; the sequence is SLTNKEISVD…NEITKRFSPK (122 aa).

The protein belongs to the DnaA family. In terms of assembly, oligomerizes as a right-handed, spiral filament on DNA at oriC.

The protein resides in the cytoplasm. In terms of biological role, plays an essential role in the initiation and regulation of chromosomal replication. ATP-DnaA binds to the origin of replication (oriC) to initiate formation of the DNA replication initiation complex once per cell cycle. Binds the DnaA box (a 9 base pair repeat at the origin) and separates the double-stranded (ds)DNA. Forms a right-handed helical filament on oriC DNA; dsDNA binds to the exterior of the filament while single-stranded (ss)DNA is stabiized in the filament's interior. The ATP-DnaA-oriC complex binds and stabilizes one strand of the AT-rich DNA unwinding element (DUE), permitting loading of DNA polymerase. After initiation quickly degrades to an ADP-DnaA complex that is not apt for DNA replication. Binds acidic phospholipids. The sequence is that of Chromosomal replication initiator protein DnaA from Clostridium acetobutylicum (strain ATCC 824 / DSM 792 / JCM 1419 / IAM 19013 / LMG 5710 / NBRC 13948 / NRRL B-527 / VKM B-1787 / 2291 / W).